Here is a 68-residue protein sequence, read N- to C-terminus: Large ribosomal subunit protein bL32 (68 aa).

Residues 1 to 21 (MAVQQNKVSKSRRNNRRAHDS) form a disordered region.

The protein belongs to the bacterial ribosomal protein bL32 family.

The chain is Large ribosomal subunit protein bL32 from Roseobacter denitrificans (strain ATCC 33942 / OCh 114) (Erythrobacter sp. (strain OCh 114)).